The chain runs to 213 residues: Sclerostin (213 aa).

The signal sequence occupies residues 1–23; that stretch reads MQLPLALCLVCLLVHAAFRVVEG. The interval 41–71 is disordered; sequence GEYPEPPPELENNKTMNRAENGGRPPHHPFE. N-linked (GlcNAc...) asparagine glycosylation is present at asparagine 53. Disulfide bonds link cysteine 80–cysteine 134, cysteine 94–cysteine 148, cysteine 105–cysteine 165, and cysteine 109–cysteine 167. In terms of domain architecture, CTCK spans 82-172; that stretch reads ELHFTRYVTD…ASCKCKRLTR (91 aa). Residue asparagine 175 is glycosylated (N-linked (GlcNAc...) asparagine). The disordered stretch occupies residues 178-213; it reads ELKDFGPEAARPQKGRKPRPRARGAKANQAELENAY. Residues 190–201 show a composition bias toward basic residues; it reads QKGRKPRPRARG.

The protein belongs to the sclerostin family. As to quaternary structure, interacts with LRP4 (via the extracellular domain); the interaction facilitates the inhibition of Wnt signaling. Interacts with LRP5 (via the first two YWTD-EGF repeat domains); the interaction inhibits Wnt-mediated signaling. Interacts with LRP6.

Its subcellular location is the secreted. The protein resides in the extracellular space. It is found in the extracellular matrix. Its function is as follows. Negative regulator of bone growth that acts through inhibition of Wnt signaling and bone formation. The protein is Sclerostin of Chlorocebus aethiops (Green monkey).